The sequence spans 377 residues: Queuine tRNA-ribosyltransferase (377 aa).

Catalysis depends on Asp-89, which acts as the Proton acceptor. Residues 89–93 (DSGGF), Asp-143, Gln-188, and Gly-215 contribute to the substrate site. The tract at residues 246 to 252 (GVGKPED) is RNA binding. The active-site Nucleophile is Asp-265. The RNA binding; important for wobble base 34 recognition stretch occupies residues 270–274 (TRNAR). Zn(2+)-binding residues include Cys-303, Cys-305, Cys-308, and His-334.

This sequence belongs to the queuine tRNA-ribosyltransferase family. As to quaternary structure, homodimer. Within each dimer, one monomer is responsible for RNA recognition and catalysis, while the other monomer binds to the replacement base PreQ1. Zn(2+) serves as cofactor.

It catalyses the reaction 7-aminomethyl-7-carbaguanine + guanosine(34) in tRNA = 7-aminomethyl-7-carbaguanosine(34) in tRNA + guanine. Its pathway is tRNA modification; tRNA-queuosine biosynthesis. Functionally, catalyzes the base-exchange of a guanine (G) residue with the queuine precursor 7-aminomethyl-7-deazaguanine (PreQ1) at position 34 (anticodon wobble position) in tRNAs with GU(N) anticodons (tRNA-Asp, -Asn, -His and -Tyr). Catalysis occurs through a double-displacement mechanism. The nucleophile active site attacks the C1' of nucleotide 34 to detach the guanine base from the RNA, forming a covalent enzyme-RNA intermediate. The proton acceptor active site deprotonates the incoming PreQ1, allowing a nucleophilic attack on the C1' of the ribose to form the product. After dissociation, two additional enzymatic reactions on the tRNA convert PreQ1 to queuine (Q), resulting in the hypermodified nucleoside queuosine (7-(((4,5-cis-dihydroxy-2-cyclopenten-1-yl)amino)methyl)-7-deazaguanosine). The sequence is that of Queuine tRNA-ribosyltransferase from Acinetobacter baumannii (strain SDF).